A 552-amino-acid polypeptide reads, in one-letter code: Cation/acetate symporter ActP (552 aa).

The next 14 membrane-spanning stretches (helical) occupy residues 6 to 26 (LLAV…AIAG), 35 to 55 (MEAI…TYWA), 78 to 98 (GLAM…SALV), 103 to 123 (FDGL…LFLI), 151 to 171 (LSAC…MVGA), 185 to 205 (VAVV…GMLA), 208 to 228 (WVQI…AIMV), 264 to 284 (ISAL…PHIL), 305 to 325 (GLMG…ILLV), 357 to 377 (LFLG…VAGL), 407 to 427 (VSKI…ILFE), 431 to 451 (IAFM…PIIL), 467 to 487 (GGWL…TIWV), and 496 to 516 (IFPY…GTWL).

This sequence belongs to the sodium:solute symporter (SSF) (TC 2.A.21) family.

The protein resides in the cell inner membrane. In terms of biological role, transports acetate. The polypeptide is Cation/acetate symporter ActP (Erwinia tasmaniensis (strain DSM 17950 / CFBP 7177 / CIP 109463 / NCPPB 4357 / Et1/99)).